The following is a 372-amino-acid chain: F-box/kelch-repeat protein At5g49000 (372 aa).

A compositionally biased stretch (basic residues) spans 1–11 (MSSPERKRKKR). The interval 1–24 (MSSPERKRKKRSLEPSPESTPNPS) is disordered. One can recognise an F-box domain in the interval 19-65 (STPNPSLPDDLIVSILARVSRLYYPILSLVSKSSRTLVTSPELYKTR). 4 Kelch repeats span residues 131–177 (NIYA…VVDG), 179–224 (IYVA…VIEG), 226–271 (IYIF…LYCY), and 273–312 (PGGI…GGKM).

This Arabidopsis thaliana (Mouse-ear cress) protein is F-box/kelch-repeat protein At5g49000.